We begin with the raw amino-acid sequence, 1067 residues long: Zinc finger MIZ domain-containing protein 1 (1067 aa).

The segment at 1–120 (MNSMDRHIQQ…HQKSRQSDPP (120 aa)) is sufficient for transactivation activity; sufficient for interaction with NOTCH1. A Glycyl lysine isopeptide (Lys-Gly) (interchain with G-Cter in SUMO2) cross-link involves residue lysine 91. Disordered stretches follow at residues 112-141 (QKSRQSDPPGKLPMQPPLSSMSSMKPTLSH) and 327-542 (NSQF…PFPP). Over residues 128-141 (PLSSMSSMKPTLSH) the composition is skewed to low complexity. Residues 413 to 429 (YGNQQYGPNSQFPTQPG) show a composition bias toward polar residues. A compositionally biased stretch (pro residues) spans 431-440 (YPAPNPPRPL). Residues 479–497 (NNTFSGSSYSNYSQGNVNR) show a composition bias toward low complexity. Pro residues predominate over residues 510–521 (SPVPGNPTPPMT). The segment at 727–808 (GEDGVEQTAI…MWGILNAIQH (82 aa)) adopts an SP-RING-type zinc-finger fold. Zn(2+) contacts are provided by cysteine 758, histidine 760, cysteine 781, and cysteine 784. Glycyl lysine isopeptide (Lys-Gly) (interchain with G-Cter in SUMO2) cross-links involve residues lysine 834 and lysine 843. The interval 837-1067 (PDGIPSKRFK…DDLLSLFENN (231 aa)) is transactivation domain. The segment covering 868 to 879 (GPSPYPLPPPPG) has biased composition (pro residues). A disordered region spans residues 868 to 1067 (GPSPYPLPPP…DDLLSLFENN (200 aa)). Polar residues-rich tracts occupy residues 881 to 895 (TNSNDYSSQGNNYQG) and 951 to 961 (SSDQPHPSIQQ). Pro residues predominate over residues 981–996 (APPPPPSQPPRQPPQA). Residues 1040–1067 (PDELLSYLDPPDLPSNSNDDLLSLFENN) show a composition bias toward low complexity.

As to quaternary structure, interacts with AR, but not with ESR1, NR3C1, PGR, THRB nor VDR. Interacts with NOTCH1 and RBPJ. Interacts with SMARCA4. Interacts (via SP-RING-type domain) with SMAD3 and SMAD4 (via MH2 domain). As to expression, expressed most abundantly in ovary and, at lower levels, in prostate, spleen and testis. Weak expression, if any, in thymus, small intestine, colon and peripheral blood leukocytes.

The protein localises to the nucleus. It is found in the nucleoplasm. Its subcellular location is the cytoplasm. Functionally, acts as a transcriptional coactivator. Increases ligand-dependent transcriptional activity of AR and promotes AR sumoylation. The stimulation of AR activity is dependent upon sumoylation. Also functions as a transcriptional coactivator in the TGF-beta signaling pathway by increasing the activity of the SMAD3/SMAD4 transcriptional complex. Involved in transcriptional activation of a subset of NOTCH1 target genes including MYC. Involved in thymocyte and T cell development. Involved in the regulation of postmitotic positioning of pyramidal neurons in the developing cerebral cortex. The chain is Zinc finger MIZ domain-containing protein 1 from Homo sapiens (Human).